The primary structure comprises 67 residues: Large ribosomal subunit protein bL35 (67 aa).

The protein belongs to the bacterial ribosomal protein bL35 family.

This Sinorhizobium medicae (strain WSM419) (Ensifer medicae) protein is Large ribosomal subunit protein bL35.